The chain runs to 170 residues: ATP synthase subunit b (170 aa).

Residues 22 to 44 traverse the membrane as a helical segment; the sequence is IINLAVVVFGLYKFLPGFLGKIL.

It belongs to the ATPase B chain family. F-type ATPases have 2 components, F(1) - the catalytic core - and F(0) - the membrane proton channel. F(1) has five subunits: alpha(3), beta(3), gamma(1), delta(1), epsilon(1). F(0) has four main subunits: a(1), b(1), b'(1) and c(10-14). The alpha and beta chains form an alternating ring which encloses part of the gamma chain. F(1) is attached to F(0) by a central stalk formed by the gamma and epsilon chains, while a peripheral stalk is formed by the delta, b and b' chains.

Its subcellular location is the cellular thylakoid membrane. In terms of biological role, f(1)F(0) ATP synthase produces ATP from ADP in the presence of a proton or sodium gradient. F-type ATPases consist of two structural domains, F(1) containing the extramembraneous catalytic core and F(0) containing the membrane proton channel, linked together by a central stalk and a peripheral stalk. During catalysis, ATP synthesis in the catalytic domain of F(1) is coupled via a rotary mechanism of the central stalk subunits to proton translocation. Functionally, component of the F(0) channel, it forms part of the peripheral stalk, linking F(1) to F(0). The polypeptide is ATP synthase subunit b (Prochlorococcus marinus (strain NATL1A)).